Consider the following 76-residue polypeptide: Sec-independent protein translocase protein TatA (76 aa).

Residues 1–21 (MGGISIWQLLIIALIVVLLFG) form a helical membrane-spanning segment. A disordered region spans residues 43–76 (MSSEDEKKAIEDTSAEKTAQTEEKKTESKDKEQA). The segment covering 46 to 76 (EDEKKAIEDTSAEKTAQTEEKKTESKDKEQA) has biased composition (basic and acidic residues).

Belongs to the TatA/E family. In terms of assembly, the Tat system comprises two distinct complexes: a TatABC complex, containing multiple copies of TatA, TatB and TatC subunits, and a separate TatA complex, containing only TatA subunits. Substrates initially bind to the TatABC complex, which probably triggers association of the separate TatA complex to form the active translocon.

It is found in the cell inner membrane. In terms of biological role, part of the twin-arginine translocation (Tat) system that transports large folded proteins containing a characteristic twin-arginine motif in their signal peptide across membranes. TatA could form the protein-conducting channel of the Tat system. In Shewanella loihica (strain ATCC BAA-1088 / PV-4), this protein is Sec-independent protein translocase protein TatA.